The chain runs to 775 residues: Serine/threonine-protein kinase ppk6 (775 aa).

Phosphoserine is present on residues Ser-132 and Ser-134. The 256-residue stretch at 503–758 folds into the Protein kinase domain; it reads YTTIKELGIG…IEETLQHHWF (256 aa). ATP contacts are provided by residues 509-517 and Lys-533; that span reads LGIGAYGQV. Catalysis depends on Asp-636, which acts as the Proton acceptor.

It belongs to the protein kinase superfamily. Ser/Thr protein kinase family.

Its subcellular location is the cytoplasm. It is found in the nucleus. It catalyses the reaction L-seryl-[protein] + ATP = O-phospho-L-seryl-[protein] + ADP + H(+). The catalysed reaction is L-threonyl-[protein] + ATP = O-phospho-L-threonyl-[protein] + ADP + H(+). The protein is Serine/threonine-protein kinase ppk6 (ppk6) of Schizosaccharomyces pombe (strain 972 / ATCC 24843) (Fission yeast).